We begin with the raw amino-acid sequence, 388 residues long: Spermidine/putrescine import ATP-binding protein PotA (388 aa).

The 231-residue stretch at 17-247 folds into the ABC transporter domain; the sequence is IEIDHVTKRF…PATVFVANFI (231 aa). Residue 49–56 coordinates ATP; that stretch reads GPSGCGKT.

Belongs to the ABC transporter superfamily. Spermidine/putrescine importer (TC 3.A.1.11.1) family. The complex is composed of two ATP-binding proteins (PotA), two transmembrane proteins (PotB and PotC) and a solute-binding protein (PotD).

It localises to the cell membrane. The enzyme catalyses ATP + H2O + polyamine-[polyamine-binding protein]Side 1 = ADP + phosphate + polyamineSide 2 + [polyamine-binding protein]Side 1.. Part of the ABC transporter complex PotABCD involved in spermidine/putrescine import. Responsible for energy coupling to the transport system. The protein is Spermidine/putrescine import ATP-binding protein PotA of Mycobacterium sp. (strain KMS).